A 410-amino-acid chain; its full sequence is Cytohesin-2 (410 aa).

Positions 13–56 (PEERMELENIRRRKQELLVEIQRLREELSEAMSEVEGLEANEGS) form a coiled coil. An SEC7 domain is found at 54 to 241 (EGSKTLQRNR…RNLYDSIRNE (188 aa)). The region spanning 259-386 (NPDREGWLLK…WIKSIQAAVS (128 aa)) is the PH domain. Residues 268–271 (KLGA), R290, Y301, R311, K349, N360, and H361 contribute to the a 1,2-diacyl-sn-glycero-3-phospho-(1D-myo-inositol-3,4,5-trisphosphate) site. The C-terminal autoinhibitory region stretch occupies residues 397–405 (RKKRISVKK).

In terms of assembly, heteromer. Composed of TAMALIN, CYTH2 and at least one GRM1. Interacts with ARRB1. Interacts with ARL4D; the interaction is direct. Directly interacts with CCDC120 through the coiled coil domain; this interaction stabilizes CCDC120, possibly by preventing its ubiquitination, and is required for neurite growth in neuroblastoma cells. Interacts (via N-terminal domain) with INAVA (via N-terminal domain).

The protein localises to the cell membrane. Its subcellular location is the cytoplasm. It localises to the cell projection. The protein resides in the growth cone. Acts as a guanine-nucleotide exchange factor (GEF). Promotes guanine-nucleotide exchange on ARF1, ARF3 and ARF6. Promotes the activation of ARF factors through replacement of GDP with GTP. The cell membrane form, in association with ARL4 proteins, recruits ARF6 to the plasma membrane. Involved in neurite growth. This is Cytohesin-2 (CYTH2) from Bos taurus (Bovine).